Here is a 34-residue protein sequence, read N- to C-terminus: Photosystem II reaction center protein M (34 aa).

Residues 5–25 form a helical membrane-spanning segment; sequence ILAFIATALFILVPTAFLLII.

Belongs to the PsbM family. In terms of assembly, PSII is composed of 1 copy each of membrane proteins PsbA, PsbB, PsbC, PsbD, PsbE, PsbF, PsbH, PsbI, PsbJ, PsbK, PsbL, PsbM, PsbT, PsbX, PsbY, PsbZ, Psb30/Ycf12, at least 3 peripheral proteins of the oxygen-evolving complex and a large number of cofactors. It forms dimeric complexes.

It localises to the plastid. It is found in the chloroplast thylakoid membrane. Functionally, one of the components of the core complex of photosystem II (PSII). PSII is a light-driven water:plastoquinone oxidoreductase that uses light energy to abstract electrons from H(2)O, generating O(2) and a proton gradient subsequently used for ATP formation. It consists of a core antenna complex that captures photons, and an electron transfer chain that converts photonic excitation into a charge separation. This subunit is found at the monomer-monomer interface. The polypeptide is Photosystem II reaction center protein M (Coffea arabica (Arabian coffee)).